The chain runs to 178 residues: Crossover junction endodeoxyribonuclease RuvC (178 aa).

Residues D11, E71, and D143 contribute to the active site. Mg(2+) is bound by residues D11, E71, and D143.

The protein belongs to the RuvC family. Homodimer which binds Holliday junction (HJ) DNA. The HJ becomes 2-fold symmetrical on binding to RuvC with unstacked arms; it has a different conformation from HJ DNA in complex with RuvA. In the full resolvosome a probable DNA-RuvA(4)-RuvB(12)-RuvC(2) complex forms which resolves the HJ. Mg(2+) is required as a cofactor.

The protein resides in the cytoplasm. It catalyses the reaction Endonucleolytic cleavage at a junction such as a reciprocal single-stranded crossover between two homologous DNA duplexes (Holliday junction).. In terms of biological role, the RuvA-RuvB-RuvC complex processes Holliday junction (HJ) DNA during genetic recombination and DNA repair. Endonuclease that resolves HJ intermediates. Cleaves cruciform DNA by making single-stranded nicks across the HJ at symmetrical positions within the homologous arms, yielding a 5'-phosphate and a 3'-hydroxyl group; requires a central core of homology in the junction. The consensus cleavage sequence is 5'-(A/T)TT(C/G)-3'. Cleavage occurs on the 3'-side of the TT dinucleotide at the point of strand exchange. HJ branch migration catalyzed by RuvA-RuvB allows RuvC to scan DNA until it finds its consensus sequence, where it cleaves and resolves the cruciform DNA. The chain is Crossover junction endodeoxyribonuclease RuvC from Neisseria meningitidis serogroup B (strain ATCC BAA-335 / MC58).